We begin with the raw amino-acid sequence, 297 residues long: Small ribosomal subunit protein uS9m (297 aa).

The segment at 278–297 is disordered; sequence VERKKPGKRKARKMPTWVKR.

This sequence belongs to the universal ribosomal protein uS9 family.

It is found in the mitochondrion. This chain is Small ribosomal subunit protein uS9m (MRPS9), found in Kluyveromyces lactis (strain ATCC 8585 / CBS 2359 / DSM 70799 / NBRC 1267 / NRRL Y-1140 / WM37) (Yeast).